The chain runs to 570 residues: Probable glucomannan 4-beta-mannosyltransferase 11 (570 aa).

Residues 57–77 (LAMTVMILAEKLFVAAVCLAV) form a helical membrane-spanning segment. Asp-157 is an active-site residue. Substrate contacts are provided by Asp-216 and Asp-218. Asp-310 is an active-site residue. Transmembrane regions (helical) follow at residues 389–409 (IAAH…SVWL), 412–432 (IEIP…CKAV), 522–542 (YSEI…VLYA), and 548–568 (IFLF…IGVC).

Belongs to the glycosyltransferase 2 family. Plant cellulose synthase-like A subfamily.

It localises to the golgi apparatus membrane. It carries out the reaction GDP-mannose + (glucomannan)n = GDP + (glucomannan)n+1.. In terms of biological role, probable mannan synthase which consists of a 4-beta-mannosyltransferase activity on mannan using GDP-mannose. The beta-1,4-mannan product is the backbone for galactomannan synthesis by galactomannan galactosyltransferase. Galactomannan is a noncellulosic polysaccharides of plant cell wall. This is Probable glucomannan 4-beta-mannosyltransferase 11 from Oryza sativa subsp. japonica (Rice).